A 118-amino-acid chain; its full sequence is ATP synthase subunit c (118 aa).

The next 2 membrane-spanning stretches (helical) occupy residues 34–54 (AIFA…GAVG) and 88–108 (MAMA…LIFA).

This sequence belongs to the ATPase C chain family. F-type ATPases have 2 components, F(1) - the catalytic core - and F(0) - the membrane proton channel. F(1) has five subunits: alpha(3), beta(3), gamma(1), delta(1), epsilon(1). F(0) has three main subunits: a(1), b(2) and c(10-14). The alpha and beta chains form an alternating ring which encloses part of the gamma chain. F(1) is attached to F(0) by a central stalk formed by the gamma and epsilon chains, while a peripheral stalk is formed by the delta and b chains.

Its subcellular location is the cell inner membrane. F(1)F(0) ATP synthase produces ATP from ADP in the presence of a proton or sodium gradient. F-type ATPases consist of two structural domains, F(1) containing the extramembraneous catalytic core and F(0) containing the membrane proton channel, linked together by a central stalk and a peripheral stalk. During catalysis, ATP synthesis in the catalytic domain of F(1) is coupled via a rotary mechanism of the central stalk subunits to proton translocation. In terms of biological role, key component of the F(0) channel; it plays a direct role in translocation across the membrane. A homomeric c-ring of between 10-14 subunits forms the central stalk rotor element with the F(1) delta and epsilon subunits. The chain is ATP synthase subunit c from Syntrophus aciditrophicus (strain SB).